We begin with the raw amino-acid sequence, 249 residues long: Cobalt transport protein CbiM (249 aa).

An N-terminal signal peptide occupies residues Met1–Ala27. The next 6 helical transmembrane spans lie at Gly33–Leu53, Leu70–Val90, Leu102–Phe122, Thr134–Trp154, Ala161–Val181, and Ile207–Phe227.

It belongs to the CbiM family. Forms an energy-coupling factor (ECF) transporter complex composed of an ATP-binding protein (A component, CbiO), a transmembrane protein (T component, CbiQ) and 2 possible substrate-capture proteins (S components, CbiM and CbiN) of unknown stoichimetry.

The protein resides in the cell membrane. It participates in cofactor biosynthesis; adenosylcobalamin biosynthesis. Functionally, part of the energy-coupling factor (ECF) transporter complex CbiMNOQ involved in cobalt import. The chain is Cobalt transport protein CbiM from Roseiflexus sp. (strain RS-1).